Here is a 477-residue protein sequence, read N- to C-terminus: Ribulose bisphosphate carboxylase large chain (477 aa).

A propeptide spanning residues 1-2 is cleaved from the precursor; sequence MS. At P3 the chain carries N-acetylproline. N6,N6,N6-trimethyllysine is present on K14. Residues N123 and T173 each coordinate substrate. The active-site Proton acceptor is the K175. Position 177 (K177) interacts with substrate. K201, D203, and E204 together coordinate Mg(2+). K201 carries the post-translational modification N6-carboxylysine. H294 (proton acceptor) is an active-site residue. R295, H327, and S379 together coordinate substrate.

The protein belongs to the RuBisCO large chain family. Type I subfamily. In terms of assembly, heterohexadecamer of 8 large chains and 8 small chains; disulfide-linked. The disulfide link is formed within the large subunit homodimers. Mg(2+) is required as a cofactor. The disulfide bond which can form in the large chain dimeric partners within the hexadecamer appears to be associated with oxidative stress and protein turnover.

It localises to the plastid. The protein localises to the chloroplast. The catalysed reaction is 2 (2R)-3-phosphoglycerate + 2 H(+) = D-ribulose 1,5-bisphosphate + CO2 + H2O. The enzyme catalyses D-ribulose 1,5-bisphosphate + O2 = 2-phosphoglycolate + (2R)-3-phosphoglycerate + 2 H(+). RuBisCO catalyzes two reactions: the carboxylation of D-ribulose 1,5-bisphosphate, the primary event in carbon dioxide fixation, as well as the oxidative fragmentation of the pentose substrate in the photorespiration process. Both reactions occur simultaneously and in competition at the same active site. In Solanum tuberosum (Potato), this protein is Ribulose bisphosphate carboxylase large chain (rbcL).